Consider the following 479-residue polypeptide: Adenosylhomocysteinase (479 aa).

The substrate site is built by Thr-56, Asp-133, and Glu-199. 200 to 202 (TTT) contributes to the NAD(+) binding site. Positions 229 and 233 each coordinate substrate. NAD(+)-binding positions include Asn-234, 263-268 (GYGDVG), Glu-286, Asn-321, 342-344 (IGH), and Asn-390.

Belongs to the adenosylhomocysteinase family. Homotetramer. NAD(+) is required as a cofactor.

The enzyme catalyses S-adenosyl-L-homocysteine + H2O = L-homocysteine + adenosine. It functions in the pathway amino-acid biosynthesis; L-homocysteine biosynthesis; L-homocysteine from S-adenosyl-L-homocysteine: step 1/1. In terms of biological role, adenosylhomocysteine is a competitive inhibitor of S-adenosyl-L-methionine-dependent methyl transferase reactions; therefore adenosylhomocysteinase may play a key role in the control of methylations via regulation of the intracellular concentration of adenosylhomocysteine. This is Adenosylhomocysteinase from Plasmodium chabaudi chabaudi.